Consider the following 507-residue polypeptide: MPSSLFADMERNGSGGGGGETLDDQRALQIALDQLSLLGLDNDESAMYDNEPRKKSINMTECVQVPSSEHVAEIVGRQGCKIKALRAKTNTYIKTPVRGEEPVFVVTGRKEDVALARREIISAAEHFSMIRASRNKNAAALNGGSVPAPPNLPGQTTIQVRVPYRVVGLVVGPKGATIKRIQQQTHTYIVTPSRDKEPVFEVTGMPENVDRAREEIEAHIAVRTGGLIEVADENDFHANGTDVGFDLHGSLWSKSNQSSGSRKALSNYRNDSSSSLGSASTDSYFGGTRMADYSPPSPDLSYTNNNNNNNGNGYVYSTGISPDCTDLTFESGFDPAPAPPPSAYTWSQLERSTGSAPYHNNANGILLNQRRLNGVGCTTAPRLSPPLHTCNGLSEHPLARRVRSDPGGGLSYSAYSNMACDSSSSSSSSSSSSSSSSSSSSSSSSSGMRRKGSRECSICFESEVIAALVPCGHNLFCMECANRICEKNQPQCPVCHAGVTQAIRIFS.

The interval 1-22 (MPSSLFADMERNGSGGGGGETL) is disordered. KH domains are found at residues 59 to 120 (MTEC…RREI) and 155 to 216 (QTTI…REEI). Disordered stretches follow at residues 256-279 (NQSSGSRKALSNYRNDSSSSLGSA) and 426-450 (SSSSSSSSSSSSSSSSSSSSSGMRR). A compositionally biased stretch (low complexity) spans 426–446 (SSSSSSSSSSSSSSSSSSSSS). An RING-type zinc finger spans residues 456–496 (CSICFESEVIAALVPCGHNLFCMECANRICEKNQPQCPVCH).

The protein localises to the cytoplasm. The protein resides in the nucleus. Its subcellular location is the cytoplasmic granule. It is found in the P-body. Functionally, RNA-binding protein. May be involved in post-transcriptional regulatory mechanisms. This Xenopus laevis (African clawed frog) protein is RNA-binding protein MEX3B (mex3b).